The primary structure comprises 95 residues: UPF0235 protein Sama_2480 (95 aa).

This sequence belongs to the UPF0235 family.

The chain is UPF0235 protein Sama_2480 from Shewanella amazonensis (strain ATCC BAA-1098 / SB2B).